We begin with the raw amino-acid sequence, 51 residues long: Glutamate dehydrogenase (51 aa).

Lysine 31 provides a ligand contact to substrate.

This sequence belongs to the Glu/Leu/Phe/Val dehydrogenases family. As to quaternary structure, homohexamer.

Its subcellular location is the mitochondrion matrix. It catalyses the reaction L-glutamate + NAD(+) + H2O = 2-oxoglutarate + NH4(+) + NADH + H(+). It carries out the reaction L-glutamate + NADP(+) + H2O = 2-oxoglutarate + NH4(+) + NADPH + H(+). Its function is as follows. Mitochondrial glutamate dehydrogenase that converts L-glutamate into alpha-ketoglutarate. Plays a key role in glutamine anaplerosis by producing alpha-ketoglutarate, an important intermediate in the tricarboxylic acid cycle. The protein is Glutamate dehydrogenase of Electrophorus electricus (Electric eel).